The chain runs to 391 residues: NADH-quinone oxidoreductase subunit D (391 aa).

This sequence belongs to the complex I 49 kDa subunit family. NDH-1 is composed of 14 different subunits. Subunits NuoB, C, D, E, F, and G constitute the peripheral sector of the complex.

It localises to the cell inner membrane. The catalysed reaction is a quinone + NADH + 5 H(+)(in) = a quinol + NAD(+) + 4 H(+)(out). Its function is as follows. NDH-1 shuttles electrons from NADH, via FMN and iron-sulfur (Fe-S) centers, to quinones in the respiratory chain. The immediate electron acceptor for the enzyme in this species is believed to be ubiquinone. Couples the redox reaction to proton translocation (for every two electrons transferred, four hydrogen ions are translocated across the cytoplasmic membrane), and thus conserves the redox energy in a proton gradient. The sequence is that of NADH-quinone oxidoreductase subunit D from Rickettsia akari (strain Hartford).